The primary structure comprises 67 residues: Peptide Hp1239 (67 aa).

Positions Met-1–Ala-23 are cleaved as a signal peptide. Phenylalanine amide is present on Phe-36. Positions Gly-40–Met-67 are excised as a propeptide.

The protein belongs to the non-disulfide-bridged peptide (NDBP) superfamily. Short antimicrobial peptide (group 4) family. As to expression, expressed by the venom gland.

It is found in the secreted. The protein resides in the target cell membrane. Its function is as follows. Amphipathic peptide with antibacterial activities. Shows antiviral activities against the herpes simplex virus type-1. It potently inhibits the initial infection by provoking the rupture of viral envelop and the dissociation of proteins from the virions (EC(50) is 0.41 uM). It also effectively inhibits viral attachment (EC(50) is 5.73 uM), viral entry (EC(50) is 4.32 uM) and viral proliferation after infection (EC(50) is 8.41 uM). Morever, it enters mammalian tested cells (Vero) and reduces the intracellular infectivity. In Heterometrus petersii (Asian forest scorpion), this protein is Peptide Hp1239.